Consider the following 545-residue polypeptide: Glucose-6-phosphate isomerase (545 aa).

The active-site Proton donor is the Glu343. Catalysis depends on residues His374 and Lys513.

It belongs to the GPI family.

The protein resides in the cytoplasm. The catalysed reaction is alpha-D-glucose 6-phosphate = beta-D-fructose 6-phosphate. The protein operates within carbohydrate biosynthesis; gluconeogenesis. It participates in carbohydrate degradation; glycolysis; D-glyceraldehyde 3-phosphate and glycerone phosphate from D-glucose: step 2/4. In terms of biological role, catalyzes the reversible isomerization of glucose-6-phosphate to fructose-6-phosphate. The polypeptide is Glucose-6-phosphate isomerase (Methylibium petroleiphilum (strain ATCC BAA-1232 / LMG 22953 / PM1)).